The primary structure comprises 201 residues: MSLSTLKNRRERGFFDGQFLIAMPGIEDRNFARTVIYICAHSDAGAMGFVINRPQSLTFTDVLLHLDMIKQEDQIVLPQRARDFPIQTGGPVESGRGFVLHSDDYSSDSSIPVSDDICLTATLDIVRAISKGDGPTRATMLLGYSSWGAGQLENEVVNNGWLTCPANEELIFDRSLDDKYERALAGMGVTAAMLSAEAGHA.

The protein belongs to the UPF0301 (AlgH) family.

The protein is UPF0301 protein Rleg2_0617 of Rhizobium leguminosarum bv. trifolii (strain WSM2304).